A 463-amino-acid chain; its full sequence is Glutamyl-tRNA reductase (463 aa).

Residues 49–52, serine 109, 114–116, and glutamine 120 each bind substrate; these read TCNR and EQQ. Cysteine 50 (nucleophile) is an active-site residue. 196–201 is a binding site for NADP(+); it reads GAGAMS.

It belongs to the glutamyl-tRNA reductase family. Homodimer.

The catalysed reaction is (S)-4-amino-5-oxopentanoate + tRNA(Glu) + NADP(+) = L-glutamyl-tRNA(Glu) + NADPH + H(+). Its pathway is porphyrin-containing compound metabolism; protoporphyrin-IX biosynthesis; 5-aminolevulinate from L-glutamyl-tRNA(Glu): step 1/2. In terms of biological role, catalyzes the NADPH-dependent reduction of glutamyl-tRNA(Glu) to glutamate 1-semialdehyde (GSA). This is Glutamyl-tRNA reductase from Corynebacterium glutamicum (strain ATCC 13032 / DSM 20300 / JCM 1318 / BCRC 11384 / CCUG 27702 / LMG 3730 / NBRC 12168 / NCIMB 10025 / NRRL B-2784 / 534).